A 274-amino-acid chain; its full sequence is Diaminopimelate epimerase (274 aa).

Asn11, Gln44, and Asn64 together coordinate substrate. Cys73 functions as the Proton donor in the catalytic mechanism. Substrate-binding positions include 74–75 (GN), Asn157, Asn190, and 208–209 (ER). Residue Cys217 is the Proton acceptor of the active site. 218 to 219 (GS) contributes to the substrate binding site.

It belongs to the diaminopimelate epimerase family. As to quaternary structure, homodimer.

The protein localises to the cytoplasm. It catalyses the reaction (2S,6S)-2,6-diaminopimelate = meso-2,6-diaminopimelate. The protein operates within amino-acid biosynthesis; L-lysine biosynthesis via DAP pathway; DL-2,6-diaminopimelate from LL-2,6-diaminopimelate: step 1/1. Functionally, catalyzes the stereoinversion of LL-2,6-diaminopimelate (L,L-DAP) to meso-diaminopimelate (meso-DAP), a precursor of L-lysine and an essential component of the bacterial peptidoglycan. This is Diaminopimelate epimerase from Erwinia tasmaniensis (strain DSM 17950 / CFBP 7177 / CIP 109463 / NCPPB 4357 / Et1/99).